Reading from the N-terminus, the 393-residue chain is Phosphoglycerate kinase (393 aa).

Residues 21–23, arginine 36, 59–62, arginine 113, and arginine 146 each bind substrate; these read DLN and HLGR. ATP is bound by residues lysine 197, glutamate 319, and 345-348; that span reads GGDT.

This sequence belongs to the phosphoglycerate kinase family. As to quaternary structure, monomer.

Its subcellular location is the cytoplasm. It catalyses the reaction (2R)-3-phosphoglycerate + ATP = (2R)-3-phospho-glyceroyl phosphate + ADP. The protein operates within carbohydrate degradation; glycolysis; pyruvate from D-glyceraldehyde 3-phosphate: step 2/5. In Nitratidesulfovibrio vulgaris (strain DSM 19637 / Miyazaki F) (Desulfovibrio vulgaris), this protein is Phosphoglycerate kinase.